The sequence spans 628 residues: MAAETDTTLPELRETVASLPTGPGIYQFKNSAGKVIYVGKAKNIRSRVRSYFRDPRQLTGKTQVLVGHITDLEIIITSSEVEALILENNLIKELKPRYNVNLKDDKTYPWLVITGEPFPRVFISRNRTRDKSTWFGPYTEAGQLRSILELIGSIFPVRSCRYSLTPENIAAKKHKLCLDYHIGKCKGPCEGLQNEAEYLEMIGEIVRLLKGRTAGLLKELHEKMLTAAAELRFEEAAELKMQLQSLRRYADRQKMVAADGMDRDVSAIASGDDEACGVVFRIREGKMLGARHFILTNTAGEPEKKLLGKVLEGYYLKSPEAMPEEVLLSAQLDLEDTESLQALSREREEECPTRRKAVKFTVPQIGEKAHLVEMCRQNARHHLAEYLVQKQKRGEAAREHYGVKALGESLHLETPPKRIECFDNSHLQGTDYVSSMVCFVNGKPLKSAYRKFRLQSLEEACGTGSSDDYAAMEQVLGRRYGGSLQDELPLPDLIVVDGGKGQANSAKKVLDRLGITVPVIGLAKRLEEVFTPDADGPFNLPKTSPALKLLQQLRDEAHRFAITYHRNIRSKRTLETGLTTIPGVGEKIAFALLERFGSVDGVAAASAEELSQFAGKVKGMSIFRHYHP.

The GIY-YIG domain occupies T21–V100. The UVR domain maps to A214–Y249.

It belongs to the UvrC family. In terms of assembly, interacts with UvrB in an incision complex.

It localises to the cytoplasm. The UvrABC repair system catalyzes the recognition and processing of DNA lesions. UvrC both incises the 5' and 3' sides of the lesion. The N-terminal half is responsible for the 3' incision and the C-terminal half is responsible for the 5' incision. This is UvrABC system protein C from Chlorobium luteolum (strain DSM 273 / BCRC 81028 / 2530) (Pelodictyon luteolum).